We begin with the raw amino-acid sequence, 91 residues long: uncharacterized protein (91 aa).

This sequence belongs to the FrmR/RcnR family.

The protein localises to the cytoplasm. This is an uncharacterized protein from Serratia marcescens.